Consider the following 189-residue polypeptide: Pyridoxal 5'-phosphate synthase subunit PdxT (189 aa).

47-49 (GES) is an L-glutamine binding site. Residue Cys79 is the Nucleophile of the active site. L-glutamine contacts are provided by residues Arg106 and 135 to 136 (IR). Catalysis depends on charge relay system residues His171 and Glu173.

Belongs to the glutaminase PdxT/SNO family. In terms of assembly, in the presence of PdxS, forms a dodecamer of heterodimers. Only shows activity in the heterodimer.

It catalyses the reaction aldehydo-D-ribose 5-phosphate + D-glyceraldehyde 3-phosphate + L-glutamine = pyridoxal 5'-phosphate + L-glutamate + phosphate + 3 H2O + H(+). The enzyme catalyses L-glutamine + H2O = L-glutamate + NH4(+). It participates in cofactor biosynthesis; pyridoxal 5'-phosphate biosynthesis. Its function is as follows. Catalyzes the hydrolysis of glutamine to glutamate and ammonia as part of the biosynthesis of pyridoxal 5'-phosphate. The resulting ammonia molecule is channeled to the active site of PdxS. In Thermoanaerobacter pseudethanolicus (strain ATCC 33223 / 39E) (Clostridium thermohydrosulfuricum), this protein is Pyridoxal 5'-phosphate synthase subunit PdxT.